Here is a 117-residue protein sequence, read N- to C-terminus: MRVKGGTVTRARRKRIMKLAKGYRGSKHRLFKTAKDQVMKSYAYAFRDRKVNKRKFRELWIARINAAARMNDISYSKLMHGLKVANIDINRKMLADLAVNDADAFKALVDEAKKALN.

Belongs to the bacterial ribosomal protein bL20 family.

Functionally, binds directly to 23S ribosomal RNA and is necessary for the in vitro assembly process of the 50S ribosomal subunit. It is not involved in the protein synthesizing functions of that subunit. In Limosilactobacillus reuteri (strain DSM 20016) (Lactobacillus reuteri), this protein is Large ribosomal subunit protein bL20.